The sequence spans 389 residues: P2X purinoceptor 4a (389 aa).

Over 1–36 (MSESVGCCDSVSQCFFDYYTSKILIIRSKKVGTLNR) the chain is Cytoplasmic. Residues 37–57 (FTQALVIAYVIGYVCVYNKGY) form a helical membrane-spanning segment. The Extracellular portion of the chain corresponds to 58–343 (QDTDTVLSSV…NIIPTLLNMG (286 aa)). ATP-binding residues include Lys-70 and Lys-72. The CTP site is built by Lys-70 and Lys-72. N-linked (GlcNAc...) asparagine glycans are attached at residues Asn-78 and Asn-113. 3 disulfides stabilise this stretch: Cys-119–Cys-168, Cys-129–Cys-152, and Cys-135–Cys-162. A CTP-binding site is contributed by Arg-143. N-linked (GlcNAc...) asparagine glycosylation is present at Asn-187. Residues Thr-189 and Leu-191 each coordinate ATP. Residue Thr-189 participates in CTP binding. Asn-213 carries an N-linked (GlcNAc...) asparagine glycan. Intrachain disulfides connect Cys-220–Cys-230 and Cys-264–Cys-273. 3 residues coordinate ATP: Asn-296, Arg-298, and Lys-316. The CTP site is built by Asn-296, Arg-298, and Lys-316. Residues 344-364 (AGLALLGLVNVICDWIVLTFM) traverse the membrane as a helical segment. At 365 to 389 (KRKQHYKEQKYTYVDDFGLLHNEDK) the chain is on the cytoplasmic side.

This sequence belongs to the P2X receptor family. In terms of assembly, functional P2XRs are organized as homomeric and heteromeric trimers. Forms homotrimer.

The protein resides in the cell membrane. It is found in the lysosome membrane. The enzyme catalyses K(+)(in) = K(+)(out). It catalyses the reaction Na(+)(in) = Na(+)(out). The catalysed reaction is Ca(2+)(in) = Ca(2+)(out). Activated by ATP. pH-dependent and inhibited by acidic pH. ATP-gated nonselective transmembrane cation channel permeable to potassium, sodium and calcium. CTP, but not GTP or UTP, functions as a weak affinity agonist for P2RX4. Activated by extracellularly released ATP, it plays multiple role in immunity and central nervous system physiology. Could also function as an ATP-gated cation channel of lysosomal membranes. The polypeptide is P2X purinoceptor 4a (p2rx4a) (Danio rerio (Zebrafish)).